A 117-amino-acid polypeptide reads, in one-letter code: Large ribosomal subunit protein bL20 (117 aa).

The protein belongs to the bacterial ribosomal protein bL20 family.

In terms of biological role, binds directly to 23S ribosomal RNA and is necessary for the in vitro assembly process of the 50S ribosomal subunit. It is not involved in the protein synthesizing functions of that subunit. The polypeptide is Large ribosomal subunit protein bL20 (Photobacterium profundum (strain SS9)).